The following is a 316-amino-acid chain: Pantothenate kinase (316 aa).

95 to 102 serves as a coordination point for ATP; the sequence is GSVAVGKS.

The protein belongs to the prokaryotic pantothenate kinase family.

Its subcellular location is the cytoplasm. The enzyme catalyses (R)-pantothenate + ATP = (R)-4'-phosphopantothenate + ADP + H(+). It functions in the pathway cofactor biosynthesis; coenzyme A biosynthesis; CoA from (R)-pantothenate: step 1/5. This is Pantothenate kinase from Shewanella baltica (strain OS195).